Reading from the N-terminus, the 267-residue chain is L-aspartate dehydrogenase (267 aa).

Positions 124 and 190 each coordinate NAD(+). His-218 is an active-site residue.

This sequence belongs to the L-aspartate dehydrogenase family.

It catalyses the reaction L-aspartate + NADP(+) + H2O = oxaloacetate + NH4(+) + NADPH + H(+). It carries out the reaction L-aspartate + NAD(+) + H2O = oxaloacetate + NH4(+) + NADH + H(+). Its pathway is cofactor biosynthesis; NAD(+) biosynthesis; iminoaspartate from L-aspartate (dehydrogenase route): step 1/1. In terms of biological role, specifically catalyzes the NAD or NADP-dependent dehydrogenation of L-aspartate to iminoaspartate. The polypeptide is L-aspartate dehydrogenase (Methanococcus maripaludis (strain C6 / ATCC BAA-1332)).